The chain runs to 79 residues: Gene 68 protein (79 aa).

Positions 58–79 are disordered; sequence ETHAARAGRPIHDALIDPKKVK.

This Mycobacterium (Mycobacteriophage L5) protein is Gene 68 protein (68).